The primary structure comprises 264 residues: 3-methyl-2-oxobutanoate hydroxymethyltransferase (264 aa).

Positions 45 and 84 each coordinate Mg(2+). 3-methyl-2-oxobutanoate-binding positions include 45 to 46, aspartate 84, and lysine 112; that span reads DS. Glutamate 114 is a Mg(2+) binding site. The active-site Proton acceptor is glutamate 181.

Belongs to the PanB family. Homodecamer; pentamer of dimers. Mg(2+) is required as a cofactor.

It localises to the cytoplasm. It catalyses the reaction 3-methyl-2-oxobutanoate + (6R)-5,10-methylene-5,6,7,8-tetrahydrofolate + H2O = 2-dehydropantoate + (6S)-5,6,7,8-tetrahydrofolate. It functions in the pathway cofactor biosynthesis; (R)-pantothenate biosynthesis; (R)-pantoate from 3-methyl-2-oxobutanoate: step 1/2. Catalyzes the reversible reaction in which hydroxymethyl group from 5,10-methylenetetrahydrofolate is transferred onto alpha-ketoisovalerate to form ketopantoate. The chain is 3-methyl-2-oxobutanoate hydroxymethyltransferase from Psychromonas ingrahamii (strain DSM 17664 / CCUG 51855 / 37).